Reading from the N-terminus, the 615-residue chain is Elongation factor 4 (615 aa).

The tr-type G domain maps to 17–198; sequence ASIRNFCIIA…RVSRTIPAPV (182 aa). GTP is bound by residues 29–34 and 145–148; these read DHGKST and NKID.

Belongs to the TRAFAC class translation factor GTPase superfamily. Classic translation factor GTPase family. LepA subfamily.

Its subcellular location is the cell membrane. The enzyme catalyses GTP + H2O = GDP + phosphate + H(+). In terms of biological role, required for accurate and efficient protein synthesis under certain stress conditions. May act as a fidelity factor of the translation reaction, by catalyzing a one-codon backward translocation of tRNAs on improperly translocated ribosomes. Back-translocation proceeds from a post-translocation (POST) complex to a pre-translocation (PRE) complex, thus giving elongation factor G a second chance to translocate the tRNAs correctly. Binds to ribosomes in a GTP-dependent manner. The chain is Elongation factor 4 from Clavibacter michiganensis subsp. michiganensis (strain NCPPB 382).